A 341-amino-acid chain; its full sequence is Cell wall mannoprotein PIR1 (341 aa).

An N-terminal signal peptide occupies residues 1–18 (MQYKKSLVASALVATSLA). Positions 19-63 (AYAPKDPWSTLTPSATYKGGITDYSSTFGIAVEPIATTASSKAKR) are excised as a propeptide. PIR1/2/3 repeat units lie at residues 64–82 (AAAI…TKTT), 83–101 (AAAV…TKTK), 102–120 (AAAV…TKTT), 126–144 (AAAV…TKTK), 145–163 (AAAV…TKTT), 164–182 (AAAV…TKTT), 183–201 (AAAV…TNTT), and 202–220 (VAPV…TLTS).

This sequence belongs to the PIR protein family. Post-translationally, covalently linked to beta-1,3-glucan of the inner cell wall layer via an alkali-sensitive ester linkage between the gamma-carboxyl group of glutamic acids, arising from specific glutamines within the PIR1/2/3 repeats, and hydroxyl groups of glucoses of beta-1,3-glucan chains. O-glycosylated. Extensively O-mannosylated.

It is found in the secreted. The protein resides in the cell wall. Functionally, component of the outer cell wall layer. Required for stability of the cell wall and for optimal growth. Required for resistance against several antifungal and cell wall-perturbing agents and for tolerance to heat shock. This is Cell wall mannoprotein PIR1 (PIR1) from Saccharomyces cerevisiae (strain YJM789) (Baker's yeast).